A 535-amino-acid polypeptide reads, in one-letter code: MTAPSKTSASPVDPSPHVAAAHDKILIVDFGSQVTQLIARRVREEGVYSEIVPFNKAEAAFAAMKPKAVILSGGPASVLDDDAPQAPLSILTAGVPILGICYGEQTLAKQLGGIVEGGHHREFGRAQIEITDDCALFDGVWEKGGKYDVWMSHGDRVTQLPEGFRGVAKAAGSPISVIADDARKFYAMQFHPEVVHTPDGAKLIRNFVRKVAGLKGDWTMRAFREEAIEKIRAQVGSGKVICGLSGGVDSAVAAVLIHEAIGDQLTCVFVDHGLLRKDEGKTVVDLFRHHYNIPLVHVDAAKLFLGELEGVSDPELKRKTIGRLFINVFEGEAKMIGGADFLAQGTLYPDVIESVSFTGGPSVTIKSHHNVGGLPERMNMQLVEPLRELFKDEVRVLGRELGLPEVFVGRHPFPGPGLAIRCPGEITAEKLEILRNADAVYIDQIRKAGLYDKIWQAFAVLLPVKTVGVMGDGRTYEYVVGLRAVTSTDGMTADFYGFEMSFLGAAATRIINEVKGVNRVVYDITSKPPGTIEWE.

The Glutamine amidotransferase type-1 domain maps to 24–217 (KILIVDFGSQ…VRKVAGLKGD (194 aa)). The Nucleophile role is filled by Cys101. Catalysis depends on residues His191 and Glu193. Residues 218–410 (WTMRAFREEA…LGLPEVFVGR (193 aa)) enclose the GMPS ATP-PPase domain. 245–251 (SGGVDSA) contributes to the ATP binding site.

Homodimer.

It catalyses the reaction XMP + L-glutamine + ATP + H2O = GMP + L-glutamate + AMP + diphosphate + 2 H(+). It participates in purine metabolism; GMP biosynthesis; GMP from XMP (L-Gln route): step 1/1. Functionally, catalyzes the synthesis of GMP from XMP. The chain is GMP synthase [glutamine-hydrolyzing] from Rhodopseudomonas palustris (strain BisB18).